A 356-amino-acid chain; its full sequence is Tetraacyldisaccharide 4'-kinase (356 aa).

51-58 provides a ligand contact to ATP; that stretch reads GWGGSGKT.

It belongs to the LpxK family.

It carries out the reaction a lipid A disaccharide + ATP = a lipid IVA + ADP + H(+). The protein operates within glycolipid biosynthesis; lipid IV(A) biosynthesis; lipid IV(A) from (3R)-3-hydroxytetradecanoyl-[acyl-carrier-protein] and UDP-N-acetyl-alpha-D-glucosamine: step 6/6. Functionally, transfers the gamma-phosphate of ATP to the 4'-position of a tetraacyldisaccharide 1-phosphate intermediate (termed DS-1-P) to form tetraacyldisaccharide 1,4'-bis-phosphate (lipid IVA). This chain is Tetraacyldisaccharide 4'-kinase, found in Oleidesulfovibrio alaskensis (strain ATCC BAA-1058 / DSM 17464 / G20) (Desulfovibrio alaskensis).